A 103-amino-acid chain; its full sequence is Small ribosomal subunit protein uS10 (103 aa).

This sequence belongs to the universal ribosomal protein uS10 family. In terms of assembly, part of the 30S ribosomal subunit.

Its function is as follows. Involved in the binding of tRNA to the ribosomes. The chain is Small ribosomal subunit protein uS10 from Escherichia coli O127:H6 (strain E2348/69 / EPEC).